Here is a 372-residue protein sequence, read N- to C-terminus: Probable O-methyltransferase 2 (372 aa).

Positions 216, 259, and 273 each coordinate S-adenosyl-L-methionine. The active-site Proton acceptor is the histidine 277.

The protein belongs to the class I-like SAM-binding methyltransferase superfamily. Cation-independent O-methyltransferase family. COMT subfamily. In terms of assembly, homodimer. Expressed predominantly in root hairs.

In terms of biological role, O-methyltransferase of unknown substrate specificity. Not active on resorcinol, orcinol, guaiacol, eugenol, ferulic acid, p-coumaric acid, catechol, caffeic acid or monomethyl ethers of resorcinol or orcinol. The sequence is that of Probable O-methyltransferase 2 (OMT2) from Sorghum bicolor (Sorghum).